We begin with the raw amino-acid sequence, 315 residues long: Aspartate carbamoyltransferase catalytic subunit (315 aa).

Arg-64 and Thr-65 together coordinate carbamoyl phosphate. Residue Lys-93 coordinates L-aspartate. Carbamoyl phosphate is bound by residues Arg-114, His-142, and Gln-145. Positions 175 and 237 each coordinate L-aspartate. Carbamoyl phosphate-binding residues include Leu-276 and Pro-277.

It belongs to the aspartate/ornithine carbamoyltransferase superfamily. ATCase family. As to quaternary structure, heterooligomer of catalytic and regulatory chains.

The enzyme catalyses carbamoyl phosphate + L-aspartate = N-carbamoyl-L-aspartate + phosphate + H(+). The protein operates within pyrimidine metabolism; UMP biosynthesis via de novo pathway; (S)-dihydroorotate from bicarbonate: step 2/3. Its function is as follows. Catalyzes the condensation of carbamoyl phosphate and aspartate to form carbamoyl aspartate and inorganic phosphate, the committed step in the de novo pyrimidine nucleotide biosynthesis pathway. The polypeptide is Aspartate carbamoyltransferase catalytic subunit (Thermofilum pendens (strain DSM 2475 / Hrk 5)).